Consider the following 406-residue polypeptide: Kelch domain-containing protein 2 (406 aa).

6 Kelch repeats span residues 31 to 85 (ERSG…NTEG), 92 to 136 (SGSC…ERID), 148 to 207 (LGVW…IWSQ), 221 to 259 (HACATVGNKGFVFGGRYRDARMNDLHYLNLDTWEWNELI), 271 to 311 (HSLT…IKFN), and 322 to 359 (HTACASDEGEVIVFGGCANNLLVHHRAAHSNEILIFSV).

In terms of assembly, component of a CRL2(KLHDC2) E3 ubiquitin-protein ligase complex, also named ECS(KLHDC2) complex, composed of CUL2, Elongin BC (ELOB and ELOC), RBX1 and substrate-specific adapter KLHDC2. May form oligomers as a KLHDC2-ELOB-ELOC complex; this interaction is autoinhibitory for the E3 ligase complex as the substrate-binding site of KLHDC2 is blocked in the oligomer. Interacts with CREB3; interaction is direct and specific as it does not interact with CREB1, ATF4, ATF6, JUN, FOS, CEBPA or herpes simplex virus transactivator VP16. Autoubiquitinated by the CRL2(KLHDC2) E3 ligase complex.

Its subcellular location is the nucleus. It functions in the pathway protein modification; protein ubiquitination. Functionally, substrate-recognition component of a Cul2-RING (CRL2) E3 ubiquitin-protein ligase complex of the DesCEND (destruction via C-end degrons) pathway, which recognizes a C-degron located at the extreme C terminus of target proteins, leading to their ubiquitination and degradation. The C-degron recognized by the DesCEND pathway is usually a motif of less than ten residues and can be present in full-length proteins, truncated proteins or proteolytically cleaved forms. The CRL2(KLHDC2) complex specifically recognizes proteins with a diglycine (Gly-Gly) at the C-terminus, leading to their ubiquitination and degradation. The CRL2(KLHDC2) complex mediates ubiquitination and degradation of truncated SELENOK and SELENOS selenoproteins produced by failed UGA/Sec decoding, which end with a diglycine. The CRL2(KLHDC2) complex also recognizes proteolytically cleaved proteins ending with Gly-Gly, such as the N-terminal fragment of USP1, leading to their degradation. May also act as an indirect repressor of CREB3-mediated transcription by interfering with CREB3-DNA-binding. In Bos taurus (Bovine), this protein is Kelch domain-containing protein 2.